Reading from the N-terminus, the 89-residue chain is Dynein light chain 1, cytoplasmic (89 aa).

The protein belongs to the dynein light chain family. Interacts with mett-10; the interaction is direct, and is required for the nuclear localization of mett-10. Component of a dynein-regulating complex composed of at least bicd-1, dlc-1 and egal-1. Interacts with egal-1 and unc-83. Interacts with fbf-2. Broadly expressed in tissues including the intestine, body wall muscles, germs cells, oocytes, the rectal valve and cells in the head.

The protein localises to the cytoplasm. It localises to the cytoskeleton. Its subcellular location is the nucleus envelope. It is found in the cytoplasmic granule. Acts as a non-catalytic accessory component of a dynein complex. Part of a complex with bicd-1 and egal-1, which is recruited to the nuclear envelope by unc-83, where in turn, it recruits dynein to the nuclear surface and regulates nuclear migrations in hypodermal precursor cells. Probably within a dynein motor complex, plays a role in the cell fate specification of the germline and oogenesis. In particular, it inhibits germ cell proliferation. Regulates the function and localization of the RNA-binding protein fbf-2 in the germline. Plays a role in mitotic and meiotic processes. Involved in the pairing of homologous chromosomes. Independently of its dynein-mediated functions, plays a role in germ cell apoptosis. The polypeptide is Dynein light chain 1, cytoplasmic (Caenorhabditis elegans).